The chain runs to 394 residues: Na(+)/H(+) antiporter NhaA (394 aa).

A run of 11 helical transmembrane segments spans residues 17 to 37 (ILLM…LAGV), 59 to 79 (LLLW…GLEV), 95 to 115 (SLPS…YLAF), 124 to 144 (VGWA…MALL), 154 to 174 (VFLL…IALF), 177 to 197 (TDLS…MVAL), 213 to 233 (FILW…GVII), 261 to 281 (FMIL…NMTL), 287 to 307 (PITL…VLLF), 328 to 348 (IIPV…IASL), and 363 to 383 (LGIL…LAKV).

The protein belongs to the NhaA Na(+)/H(+) (TC 2.A.33) antiporter family.

The protein localises to the cell inner membrane. The enzyme catalyses Na(+)(in) + 2 H(+)(out) = Na(+)(out) + 2 H(+)(in). In terms of biological role, na(+)/H(+) antiporter that extrudes sodium in exchange for external protons. The protein is Na(+)/H(+) antiporter NhaA of Shewanella frigidimarina (strain NCIMB 400).